Here is a 29-residue protein sequence, read N- to C-terminus: Galanin (29 aa).

Ala-29 is modified (alanine amide).

Belongs to the galanin family.

It localises to the secreted. Its function is as follows. Contracts smooth muscle of the gastrointestinal and genitourinary tract, regulates growth hormone release, modulates insulin release, and may be involved in the control of adrenal secretion. In Amia calva (Bowfin), this protein is Galanin (gal).